A 799-amino-acid polypeptide reads, in one-letter code: Protein scabrous (799 aa).

The N-terminal stretch at 1–51 is a signal peptide; it reads MRDWQTFPDLQKKKVSRDHLNCPATMAGSNVLWPILLAVVLLQISVAFVSG. Residues 287-316 form a disordered region; it reads TRKDGSSASVEEESGSQEANQEQTGLETTA. Asn372 carries an N-linked (GlcNAc...) asparagine glycan. Residues 489–498 are compositionally biased toward basic residues; it reads LNKPHKRPHH. Positions 489 to 509 are disordered; the sequence is LNKPHKRPHHQNVQAQMPQDD. One can recognise a Fibrinogen C-terminal domain in the interval 533 to 737; it reads AIINKLPHDC…SSRMLVKRLP (205 aa). A disulfide bridge links Cys542 with Cys568. Asn587, Asn618, and Asn660 each carry an N-linked (GlcNAc...) asparagine glycan. Cys687 and Cys700 are disulfide-bonded. 2 N-linked (GlcNAc...) asparagine glycosylation sites follow: Asn744 and Asn787.

In terms of processing, possesses five pairs of dibasic residues that may be the target of proteolytic processing.

It is found in the late endosome. Functionally, involved in regulation of neurogenesis. May encode a lateral inhibitor of R8 differentiation. In conjunction with Gp150, promotes Notch activation in response to Delta by regulating acquisition of insensitivity to Delta in a subset of cells. The chain is Protein scabrous (sca) from Drosophila melanogaster (Fruit fly).